Reading from the N-terminus, the 750-residue chain is Tyrosine-protein phosphatase 2 (750 aa).

The tract at residues Met1–Met20 is disordered. Ser258 carries the phosphoserine modification. Disordered regions lie at residues Leu327–Tyr348 and Val425–Tyr450. The span at Lys330 to Tyr348 shows a compositional bias: polar residues. Positions Ser383 to Tyr737 constitute a Tyrosine-protein phosphatase domain. The residue at position 430 (Ser430) is a Phosphoserine. Cys666 acts as the Phosphocysteine intermediate in catalysis.

Belongs to the protein-tyrosine phosphatase family. Non-receptor class subfamily. In terms of assembly, interacts with HOG1.

It is found in the cytoplasm. It localises to the nucleus. It carries out the reaction O-phospho-L-tyrosyl-[protein] + H2O = L-tyrosyl-[protein] + phosphate. Major phosphatase responsible with PTP3 for tyrosine dephosphorylation of MAP kinase HOG1 to inactivate its activity. May also be involved in the regulation of MAP kinase FUS3. May be implicated in the ubiquitin-mediated protein degradation. This is Tyrosine-protein phosphatase 2 (PTP2) from Saccharomyces cerevisiae (strain ATCC 204508 / S288c) (Baker's yeast).